The sequence spans 161 residues: 2-C-methyl-D-erythritol 2,4-cyclodiphosphate synthase (161 aa).

Positions 9 and 11 each coordinate a divalent metal cation. 4-CDP-2-C-methyl-D-erythritol 2-phosphate-binding positions include 9 to 11 (DFH) and 37 to 38 (HS). Residue His45 participates in a divalent metal cation binding. 4-CDP-2-C-methyl-D-erythritol 2-phosphate-binding positions include 59-61 (DIG), 64-68 (FPDTD), 135-138 (TTTE), and Arg145.

This sequence belongs to the IspF family. In terms of assembly, homotrimer. A divalent metal cation is required as a cofactor.

The enzyme catalyses 4-CDP-2-C-methyl-D-erythritol 2-phosphate = 2-C-methyl-D-erythritol 2,4-cyclic diphosphate + CMP. The protein operates within isoprenoid biosynthesis; isopentenyl diphosphate biosynthesis via DXP pathway; isopentenyl diphosphate from 1-deoxy-D-xylulose 5-phosphate: step 4/6. In terms of biological role, involved in the biosynthesis of isopentenyl diphosphate (IPP) and dimethylallyl diphosphate (DMAPP), two major building blocks of isoprenoid compounds. Catalyzes the conversion of 4-diphosphocytidyl-2-C-methyl-D-erythritol 2-phosphate (CDP-ME2P) to 2-C-methyl-D-erythritol 2,4-cyclodiphosphate (ME-CPP) with a corresponding release of cytidine 5-monophosphate (CMP). The sequence is that of 2-C-methyl-D-erythritol 2,4-cyclodiphosphate synthase from Leptospira interrogans serogroup Icterohaemorrhagiae serovar copenhageni (strain Fiocruz L1-130).